The following is a 295-amino-acid chain: sn-glycerol-3-phosphate transport system permease protein UgpA (295 aa).

Over 1 to 11 the chain is Cytoplasmic; the sequence is MSSSRPVFRSR. Residues 12 to 32 form a helical membrane-spanning segment; that stretch reads WLPYLLVAPQLIITVIFFIWP. The Periplasmic portion of the chain corresponds to 33 to 80; it reads AGEALWYSLQSVDPFGFSSQFVGLDNFVTLFHDSYYLDAFWTTIKFST. The ABC transmembrane type-1 domain maps to 76–284; that stretch reads IKFSTFVTVS…FLVIVLTVVQ (209 aa). The chain crosses the membrane as a helical span at residues 81-101; the sequence is FVTVSGLLVSLFFAALVEYIV. Residues 102–109 lie on the Cytoplasmic side of the membrane; that stretch reads RGSRFYQT. Residues 110-130 form a helical membrane-spanning segment; the sequence is LMLLPYAVAPAVAAVLWIFLF. Over 131-156 the chain is Periplasmic; the sequence is NPGRGLITHFLAEFGYDWNHAQNSGQ. A helical transmembrane segment spans residues 157–177; sequence AMFLVVFASVWKQISYNFLFF. Residues 178–207 lie on the Cytoplasmic side of the membrane; the sequence is YAALQSIPRSLIEAAAIDGAGPIRRFFKIA. Residues 208-228 form a helical membrane-spanning segment; that stretch reads LPLIAPVSFFLLVVNLVYAFF. Over 229-262 the chain is Periplasmic; that stretch reads DTFPVIDAATSGGPVQATTTLIYKIYREGFTGLD. Residues 263–283 traverse the membrane as a helical segment; it reads LASSAAQSVVLMFLVIVLTVV. Over 284-295 the chain is Cytoplasmic; the sequence is QFRYVEGKVRYQ.

Belongs to the binding-protein-dependent transport system permease family. UgpAE subfamily. In terms of assembly, the complex is composed of two ATP-binding proteins (UgpC), two transmembrane proteins (UgpA and UgpE) and a solute-binding protein (UgpB).

The protein localises to the cell inner membrane. In terms of biological role, part of the ABC transporter complex UgpBAEC involved in sn-glycerol-3-phosphate (G3P) import. Probably responsible for the translocation of the substrate across the membrane. The protein is sn-glycerol-3-phosphate transport system permease protein UgpA (ugpA) of Escherichia coli O6:K15:H31 (strain 536 / UPEC).